Consider the following 1045-residue polypeptide: MDIS1-interacting receptor like kinase 2 (1045 aa).

Residues 1–43 form the signal peptide; it reads MNKTNPERKISLTSFKERMACKEKPRDLQVLLIISIVLSCSFA. Over 44-709 the chain is Extracellular; that stretch reads VSATVEEANA…SKKSHKDRNL (666 aa). N-linked (GlcNAc...) asparagine glycans are attached at residues Asn63, Asn77, Asn99, and Asn119. LRR repeat units follow at residues 92-116, 117-140, 141-165, 166-189, 191-212, 213-237, 238-260, 262-285, 286-309, 311-333, 334-356, 357-381, 383-405, 406-429, 431-452, 453-476, 477-501, 502-525, 527-549, 550-573, 575-597, 598-620, 621-644, and 646-670; these read LGSI…PFSS, LPNL…LWGR, FSKL…LGDL, SNLD…IGRL, KVTE…SFGN, LTKL…IGNL, PNLR…SFGN, KNVT…IGNM, TALD…LGNI, TLAV…LGEM, ESMI…SFGK, LTAL…IANS, ELTV…ICRG, GKLE…LRDC, SLIR…AFGV, YPTL…NWEQ, SQKL…IWNM, TQLS…ISNI, RISK…IRLL, TNLE…LNNL, RLYY…LTKL, SQLQ…QFRS, LQNL…SFKD, and LALT…AFRN. 2 N-linked (GlcNAc...) asparagine glycosylation sites follow: Asn179 and Asn212. 3 N-linked (GlcNAc...) asparagine glycosylation sites follow: Asn249, Asn263, and Asn284. N-linked (GlcNAc...) asparagine glycosylation is present at Asn323. 3 N-linked (GlcNAc...) asparagine glycosylation sites follow: Asn380, Asn393, and Asn410. 2 N-linked (GlcNAc...) asparagine glycosylation sites follow: Asn487 and Asn500. N-linked (GlcNAc...) asparagine glycosylation occurs at Asn580. N-linked (GlcNAc...) asparagine glycosylation occurs at Asn633. Asn687 carries an N-linked (GlcNAc...) asparagine glycan. Residues 710 to 730 traverse the membrane as a helical segment; it reads IIYILVPIIGAIIILSVCAGI. The Cytoplasmic portion of the chain corresponds to 731-1045; it reads FICFRKRTKQ…TMLSISTAFS (315 aa). A Phosphothreonine modification is found at Thr772. The 271-residue stretch at 775–1045 folds into the Protein kinase domain; that stretch reads FDPKYLIGTG…TMLSISTAFS (271 aa). ATP contacts are provided by residues 781–789 and Lys802; that span reads IGTGGHGKV. Tyr853 and Tyr892 each carry phosphotyrosine. Asp905 serves as the catalytic Proton acceptor. At Ser938 the chain carries Phosphoserine. Phosphotyrosine is present on residues Tyr946 and Tyr953.

It belongs to the protein kinase superfamily. Ser/Thr protein kinase family. In terms of assembly, interacts with MDIS1 and LURE1.2. Binds to SCOOP12; this interaction triggers the formation of complex between MIK2 and the BAK1/SERK3 and SERK4 coreceptors. Expressed in pollen tubes. Highly expressed in shoots, roots and leaves.

It is found in the cell membrane. It catalyses the reaction L-seryl-[protein] + ATP = O-phospho-L-seryl-[protein] + ADP + H(+). The enzyme catalyses L-threonyl-[protein] + ATP = O-phospho-L-threonyl-[protein] + ADP + H(+). Acts as a receptor of SCOOP peptides from Brassicaceae plants regulating multiple processing including plant growth, development and stress responses. Perception of SCOOP peptides induces the association of MIK2 with the coreceptors BAK1/SERK3 and SERK4 and relays the signaling through the activation of receptor-like cytosolic kinases (RLCKs) BIK1 and PBL1. Also able to detect SCOOP-like proteins (SCOOPL) present in fungal Fusarium spp. and bacterial Comamonadaceae to elicit various immune responses, including growth inhibition, ROS production, calcium Ca(2+) influx, MAPK activation and MYB51 promoter activation in roots, thus being required for resistance to several root pathogens. Involved in the pollen tube perception of the female signal. Required to trigger defense responses toward generalist herbivores such as Spodoptera littoralis, probably via the activation of jasmonate and indole glucosinolate biosynthesis. The sequence is that of MDIS1-interacting receptor like kinase 2 from Arabidopsis thaliana (Mouse-ear cress).